The following is a 62-amino-acid chain: MSAWRKAGISYAAYLNVAAQAIRSSLKTELQTASVLNRSQTDAFYTQYKNGTAASEPTPITK.

The residue at position 52 (T52) is a Phosphothreonine.

Belongs to the eukaryotic ATPase epsilon family. F-type ATPases have 2 components, CF(1) - the catalytic core - and CF(0) - the membrane proton channel. CF(1) has five subunits: alpha(3), beta(3), gamma(1), delta(1), epsilon(1). CF(0) has three main subunits: a, b and c.

The protein localises to the mitochondrion. It localises to the mitochondrion inner membrane. Its function is as follows. Mitochondrial membrane ATP synthase (F(1)F(0) ATP synthase or Complex V) produces ATP from ADP in the presence of a proton gradient across the membrane which is generated by electron transport complexes of the respiratory chain. F-type ATPases consist of two structural domains, F(1) - containing the extramembraneous catalytic core, and F(0) - containing the membrane proton channel, linked together by a central stalk and a peripheral stalk. During catalysis, ATP synthesis in the catalytic domain of F(1) is coupled via a rotary mechanism of the central stalk subunits to proton translocation. Part of the complex F(1) domain and of the central stalk which is part of the complex rotary element. Rotation of the central stalk against the surrounding alpha(3)beta(3) subunits leads to hydrolysis of ATP in three separate catalytic sites on the beta subunits. This is ATP synthase subunit epsilon, mitochondrial (ATP15) from Saccharomyces cerevisiae (strain ATCC 204508 / S288c) (Baker's yeast).